The chain runs to 703 residues: MAGGGRGAGLPAAGEAAKAGRVGVGTTKRARDPSPNSKDPNGVVANLLWRRYSGKVVAEVKASILPYVASTLEAKQVEKGKEEGLTGKTSRERERRKGGFVGVIAAEKKPALQLHGDEKYQKKAGNDPVPPTIDDTSKTGGLHLHGGHVSQSPPDSNALSSQRFGSSSPGGDMKNKTRKRTCTFYAQGRCKNGKSCTFLHEGEVSGSDNQVYGNHGGTGEGSEIQHPSSSKEHQFKNSAGSSQHEIYRTLVHAYGEDNRGLTHPVVKHSCHMLKASHGFKIGGSLTANPTNEVVQLPVVQEKNHEPYFMGHQISLGTNNCLNDMGAYSRLRLDGGKLQFEVAKGDSPRDSHLSRSYLEKNPLKPDYRYQPFDSTISLDPHQYSKKLSAYGGATENLPHKHQEEKSSSHVSYSLNSYTGFRKQGHDSSDFFLVNQSLRATSHHGTLPLHQLTPDKDASHHKGADFDKGGTSRSTLHVSSSSQPVVASAGKLSPIKDEVWITSVPFVPSFNFPDFPGSTSPSKSQYDPLVDSIDPPKVESLNNLKTSNISCSISSQHVDTNVIRGGSLEKPLTFADKLARNVSAKGSNDFGLISYDRGHSSSLDGDNRVKTCERKNDASLNNEKSDFRFHLVEHVKELVKPIWKEGNLSKEAHKLIVKKSVDKIFASLEPNQMPETEKAITTYITASAPKIEKLVKAYVDRYRTS.

Disordered regions lie at residues 1–42, 112–176, 204–242, and 442–481; these read MAGG…DPNG, LQLH…MKNK, VSGSDNQVYGNHGGTGEGSEIQHPSSSKEHQFKNSAGSS, and HGTLPLHQLTPDKDASHHKGADFDKGGTSRSTLHVSSSSQ. The segment covering 9 to 25 has biased composition (low complexity); that stretch reads GLPAAGEAAKAGRVGVG. A compositionally biased stretch (basic and acidic residues) spans 112–125; sequence LQLHGDEKYQKKAG. Positions 149 to 169 are enriched in polar residues; that stretch reads VSQSPPDSNALSSQRFGSSSP. Residues 176 to 203 form a C3H1-type zinc finger; the sequence is KTRKRTCTFYAQGRCKNGKSCTFLHEGE. Positions 451 to 468 are enriched in basic and acidic residues; the sequence is TPDKDASHHKGADFDKGG. A compositionally biased stretch (low complexity) spans 470 to 481; the sequence is SRSTLHVSSSSQ.

This is Zinc finger CCCH domain-containing protein 36 from Oryza sativa subsp. japonica (Rice).